Here is a 61-residue protein sequence, read N- to C-terminus: Small ribosomal subunit protein uS14 (61 aa).

Zn(2+) is bound by residues cysteine 24, cysteine 27, cysteine 40, and cysteine 43.

This sequence belongs to the universal ribosomal protein uS14 family. Zinc-binding uS14 subfamily. In terms of assembly, part of the 30S ribosomal subunit. Contacts proteins S3 and S10. It depends on Zn(2+) as a cofactor.

Binds 16S rRNA, required for the assembly of 30S particles and may also be responsible for determining the conformation of the 16S rRNA at the A site. The chain is Small ribosomal subunit protein uS14 from Dehalococcoides mccartyi (strain ATCC BAA-2266 / KCTC 15142 / 195) (Dehalococcoides ethenogenes (strain 195)).